A 317-amino-acid polypeptide reads, in one-letter code: Actin-related protein 2/3 complex subunit 2 (317 aa).

This sequence belongs to the ARPC2 family. In terms of assembly, component of the Arp2/3 complex composed of arp2, act2, arc1/p41-ARC, arc2/p34-ARC, arc3/p21-ARC, arc4/p20-ARC and arc5/p16-ARC.

The protein resides in the cytoplasm. It is found in the cytoskeleton. Its subcellular location is the actin patch. Its function is as follows. Functions as actin-binding component of the Arp2/3 complex which is involved in regulation of actin polymerization and together with an activating nucleation-promoting factor (NPF) mediates the formation of branched actin networks. Seems to contact the mother actin filament. The sequence is that of Actin-related protein 2/3 complex subunit 2 (arc2) from Schizosaccharomyces pombe (strain 972 / ATCC 24843) (Fission yeast).